Here is a 324-residue protein sequence, read N- to C-terminus: Endochitinase A2 (324 aa).

An N-terminal signal peptide occupies residues 1 to 20 (MSKLRIPILLVLFIVSCCSA). The 41-residue stretch at 21-61 (EQCGTQAGGALCPGGLCCSKFGWCGSTSEYCGDGCQSQCSG) folds into the Chitin-binding type-1 domain. Intrachain disulfides connect cysteine 23-cysteine 38, cysteine 32-cysteine 44, cysteine 37-cysteine 51, and cysteine 55-cysteine 59. The active-site Proton donor is glutamate 133. 2 disulfides stabilise this stretch: cysteine 151–cysteine 170 and cysteine 269–cysteine 301. A propeptide spans 310–324 (SLPLSSILLDTVAAA) (removed in mature form).

This sequence belongs to the glycosyl hydrolase 19 family. Chitinase class I subfamily.

It carries out the reaction Random endo-hydrolysis of N-acetyl-beta-D-glucosaminide (1-&gt;4)-beta-linkages in chitin and chitodextrins.. Functionally, defense against chitin-containing fungal pathogens. This is Endochitinase A2 (CHI2) from Pisum sativum (Garden pea).